We begin with the raw amino-acid sequence, 576 residues long: Lysine--tRNA ligase (576 aa).

Mg(2+) is bound by residues Glu-412 and Glu-419.

This sequence belongs to the class-II aminoacyl-tRNA synthetase family. As to quaternary structure, homodimer. The cofactor is Mg(2+).

Its subcellular location is the cytoplasm. The catalysed reaction is tRNA(Lys) + L-lysine + ATP = L-lysyl-tRNA(Lys) + AMP + diphosphate. The protein is Lysine--tRNA ligase of Parabacteroides distasonis (strain ATCC 8503 / DSM 20701 / CIP 104284 / JCM 5825 / NCTC 11152).